A 264-amino-acid chain; its full sequence is Thymidylate synthase (264 aa).

R21 contacts dUMP. H51 is a (6R)-5,10-methylene-5,6,7,8-tetrahydrofolate binding site. Residue 126–127 coordinates dUMP; the sequence is RR. The active-site Nucleophile is the C146. DUMP-binding positions include 166 to 169, N177, and 207 to 209; these read RSCD and HLY. Residue D169 coordinates (6R)-5,10-methylene-5,6,7,8-tetrahydrofolate. Position 263 (A263) interacts with (6R)-5,10-methylene-5,6,7,8-tetrahydrofolate.

It belongs to the thymidylate synthase family. Bacterial-type ThyA subfamily. In terms of assembly, homodimer.

The protein localises to the cytoplasm. The enzyme catalyses dUMP + (6R)-5,10-methylene-5,6,7,8-tetrahydrofolate = 7,8-dihydrofolate + dTMP. It functions in the pathway pyrimidine metabolism; dTTP biosynthesis. In terms of biological role, catalyzes the reductive methylation of 2'-deoxyuridine-5'-monophosphate (dUMP) to 2'-deoxythymidine-5'-monophosphate (dTMP) while utilizing 5,10-methylenetetrahydrofolate (mTHF) as the methyl donor and reductant in the reaction, yielding dihydrofolate (DHF) as a by-product. This enzymatic reaction provides an intracellular de novo source of dTMP, an essential precursor for DNA biosynthesis. This chain is Thymidylate synthase, found in Shewanella baltica (strain OS223).